The primary structure comprises 30 residues: Alpha-defensin PhD-4 (30 aa).

3 disulfide bridges follow: C2/C30, C4/C19, and C9/C29.

The protein localises to the secreted. Its function is as follows. In low salt conditions, has antibacterial activity against the Gram-negative bacterium E.coli ML35p (MIC=2.4 uM), the Gram-positive bacteria L.monocytogenes EGD (MIC=2.2 uM) and methicillin-resistant S.aureus ATCC 33591 (MIC=3.5 uM), and the fungus C.albicans 820 (MIC=3.9 uM). At high physiological salt concentrations the antimicrobial activity decreases significantly: E.coli ML35p (MIC=7.1 uM), L.monocytogenes EGD (MIC=1.8 uM), S.aureus ATCC 33591 (MIC=&gt;50 uM), and C.albicans 820 (MIC=&gt;50 uM). This chain is Alpha-defensin PhD-4, found in Papio hamadryas (Hamadryas baboon).